We begin with the raw amino-acid sequence, 586 residues long: Major facilitator superfamily domain-containing protein 6-like (586 aa).

2 helical membrane passes run 50-70 (ILMG…AFLA) and 78-98 (MFLT…VLVP). A disordered region spans residues 218 to 237 (GPVNLSKPQGDTQTPDHSSK). The span at 223–237 (SKPQGDTQTPDHSSK) shows a compositional bias: polar residues. The next 9 membrane-spanning stretches (helical) occupy residues 240–260 (PWTF…AAPL), 284–304 (LWVW…ALVG), 318–338 (VIYF…STAF), 365–385 (LILL…VQDF), 397–417 (ELVM…FHPF), 428–448 (VGVL…YAFI), 454–474 (VLPV…AVGA), 494–514 (GHFY…VVLH), and 519–538 (VLYE…FLSI).

Belongs to the major facilitator superfamily. MFSD6 family.

The protein resides in the membrane. This is Major facilitator superfamily domain-containing protein 6-like (Mfsd6l) from Mus musculus (Mouse).